The sequence spans 401 residues: Phosphoglycerate kinase (401 aa).

Substrate is bound by residues 20–22, Arg-35, 58–61, Arg-117, and Arg-154; these read DFN and HLGR. ATP-binding positions include Lys-204, Gly-298, Glu-329, and 358-361; that span reads GGDS.

Belongs to the phosphoglycerate kinase family. As to quaternary structure, monomer.

The protein resides in the cytoplasm. It catalyses the reaction (2R)-3-phosphoglycerate + ATP = (2R)-3-phospho-glyceroyl phosphate + ADP. It participates in carbohydrate degradation; glycolysis; pyruvate from D-glyceraldehyde 3-phosphate: step 2/5. This Bifidobacterium longum (strain DJO10A) protein is Phosphoglycerate kinase.